Consider the following 36-residue polypeptide: Cytochrome b6-f complex subunit 7 (36 aa).

Topologically, residues Asn1–Glu5 are lumenal. The helical transmembrane segment at Ile6–Leu28 threads the bilayer. Residues Arg29 to Glu36 are Stromal-facing.

The protein belongs to the PetM family. As to quaternary structure, the 4 large subunits of the cytochrome b6-f complex are cytochrome b6, subunit IV (17 kDa polypeptide, PetD), cytochrome f and the Rieske protein, while the 4 small subunits are PetG, PetL, PetM and PetN. The complex functions as a dimer.

The protein resides in the plastid. The protein localises to the chloroplast thylakoid membrane. Component of the cytochrome b6-f complex, which mediates electron transfer between photosystem II (PSII) and photosystem I (PSI), cyclic electron flow around PSI, and state transitions. The protein is Cytochrome b6-f complex subunit 7 of Spinacia oleracea (Spinach).